Here is a 307-residue protein sequence, read N- to C-terminus: uncharacterized protein (307 aa).

An HTH lysR-type domain is found at 11 to 68 (IRLRHLHTFVAVAQQGTLGRAAETLNLSQPALSKTLNELEQLTGARLFERGRQGAQLT). The H-T-H motif DNA-binding region spans 28–47 (LGRAAETLNLSQPALSKTLN).

The protein belongs to the LysR transcriptional regulatory family.

This is an uncharacterized protein from Escherichia coli (strain K12).